Consider the following 158-residue polypeptide: Protein NrdI (158 aa).

The protein belongs to the NrdI family.

Probably involved in ribonucleotide reductase function. The sequence is that of Protein NrdI from Rhodococcus jostii (strain RHA1).